A 762-amino-acid polypeptide reads, in one-letter code: Polyadenylate-binding protein, cytoplasmic and nuclear (762 aa).

Residues 39–58 (TGEEIDTAGPTPSSAAPHPQ) are disordered. Low complexity predominate over residues 48 to 58 (PTPSSAAPHPQ). 4 RRM domains span residues 61 to 139 (ASLY…WSQR), 149 to 226 (GNVF…HHIP), 242 to 320 (TNIY…RAQK), and 346 to 470 (VNLY…LAQR). Disordered stretches follow at residues 376–429 (KVMR…KSKL), 596–663 (SALA…AGAP), and 740–762 (VRQQ…EEKA). The segment covering 389–425 (GESKEGEESEKNKENKPEEKEGDDSKPEEKEGEDSKS) has biased composition (basic and acidic residues). Residues 600-612 (GGRGGPAGRGPMQ) show a composition bias toward gly residues. The span at 645–663 (AAGRAPAGAPAGARGAGAP) shows a compositional bias: low complexity. Residues 664–741 (EGLQGQLAAV…ALAVYDDYVR (78 aa)) form the PABC domain. Basic and acidic residues predominate over residues 753–762 (SKEEKTEEKA).

The protein belongs to the polyadenylate-binding protein type-1 family.

The protein resides in the cytoplasm. It is found in the nucleus. In terms of biological role, binds the poly(A) tail of mRNA. Appears to be an important mediator of the multiple roles of the poly(A) tail in mRNA biogenesis, stability and translation. In the nucleus, involved in both mRNA cleavage and polyadenylation. Is also required for efficient mRNA export to the cytoplasm. Acts in concert with a poly(A)-specific nuclease (PAN) to affect poly(A) tail shortening, which may occur concomitantly with either nucleocytoplasmic mRNA transport or translational initiation. In the cytoplasm, stimulates translation initiation and regulates mRNA decay through translation termination-coupled poly(A) shortening, probably mediated by PAN. This is Polyadenylate-binding protein, cytoplasmic and nuclear (PAB1) from Pyricularia oryzae (strain 70-15 / ATCC MYA-4617 / FGSC 8958) (Rice blast fungus).